A 337-amino-acid polypeptide reads, in one-letter code: Monoacylglycerol lipase ABHD6 (337 aa).

The Extracellular portion of the chain corresponds to 1-8; the sequence is MDLDVVNM. A helical; Signal-anchor for type II membrane protein transmembrane segment spans residues 9-29; that stretch reads FVIAGGTLAIPILAFVASFLL. At 30–337 the chain is on the cytoplasmic side; the sequence is WPSALIRIYY…HNTDNNKKLD (308 aa). Positions 72 to 313 constitute an AB hydrolase-1 domain; it reads PSILMLHGFS…CGHSVVMERP (242 aa). Phe-80 serves as a coordination point for (9Z)-octadecenoate. Ser-148 functions as the Nucleophile in the catalytic mechanism. Met-149 provides a ligand contact to (9Z)-octadecenoate. Active-site charge relay system residues include Asp-278 and His-306. His-306 serves as a coordination point for (9Z)-octadecenoate.

Belongs to the AB hydrolase superfamily.

Its subcellular location is the late endosome membrane. The protein resides in the lysosome membrane. The protein localises to the mitochondrion membrane. It catalyses the reaction Hydrolyzes glycerol monoesters of long-chain fatty acids.. The enzyme catalyses 1-octanoylglycerol + H2O = octanoate + glycerol + H(+). It carries out the reaction 1-decanoylglycerol + H2O = decanoate + glycerol + H(+). The catalysed reaction is 1-dodecanoylglycerol + H2O = dodecanoate + glycerol + H(+). It catalyses the reaction 1-tetradecanoylglycerol + H2O = tetradecanoate + glycerol + H(+). The enzyme catalyses 2-hexadecanoylglycerol + H2O = glycerol + hexadecanoate + H(+). It carries out the reaction 2-(9Z-octadecenoyl)-glycerol + H2O = glycerol + (9Z)-octadecenoate + H(+). The catalysed reaction is 1-(9Z-octadecenoyl)-glycerol + H2O = glycerol + (9Z)-octadecenoate + H(+). It catalyses the reaction 2-(9Z,12Z-octadecadienoyl)-glycerol + H2O = (9Z,12Z)-octadecadienoate + glycerol + H(+). The enzyme catalyses 2-(5Z,8Z,11Z,14Z-eicosatetraenoyl)-glycerol + H2O = glycerol + (5Z,8Z,11Z,14Z)-eicosatetraenoate + H(+). It carries out the reaction 1-(5Z,8Z,11Z,14Z-eicosatetraenoyl)-glycerol + H2O = glycerol + (5Z,8Z,11Z,14Z)-eicosatetraenoate + H(+). The catalysed reaction is 1-(9Z,12Z-octadecadienoyl)-glycerol + H2O = (9Z,12Z)-octadecadienoate + glycerol + H(+). It catalyses the reaction 3-(9Z-octadecenoyl)-sn-glycero-1-phospho-(3'-(9Z-octadecenoyl)-1'-sn-glycerol) + H2O = 3-(9Z-octadecenoyl)-sn-glycero-1-phospho-(1'-sn-glycerol) + (9Z)-octadecenoate + H(+). The enzyme catalyses (S,S)-2-(9Z-octadecenoyl)-sn-glycero-1-phospho-(2'-(9Z-octadecenoyl)-1'-sn-glycerol) + H2O = (S,S)-2-(9Z-octadecenoyl)-sn-glycero-1-phospho-(1'-sn-glycerol) + (9Z)-octadecenoate + H(+). It carries out the reaction (R,R)-2-(9Z-octadecenoyl)-sn-glycero-3-phospho-(2'-(9Z-octadecenoyl)-3'-sn-glycerol) + H2O = (R,R)-2-(9Z-octadecenoyl)-sn-glycero-3-phospho-(3'-sn-glycerol) + (9Z)-octadecenoate + H(+). Functionally, lipase that preferentially hydrolysis medium-chain saturated monoacylglycerols including 2-arachidonoylglycerol. Through 2-arachidonoylglycerol degradation may regulate endocannabinoid signaling pathways. Also has a lysophosphatidyl lipase activity with a preference for lysophosphatidylglycerol among other lysophospholipids. Also able to degrade bis(monoacylglycero)phosphate (BMP) and constitutes the major enzyme for BMP catabolism. BMP, also known as lysobisphosphatidic acid, is enriched in late endosomes and lysosomes and plays a key role in the formation of intraluminal vesicles and in lipid sorting. The protein is Monoacylglycerol lipase ABHD6 of Homo sapiens (Human).